The chain runs to 1665 residues: MLKCIPLWRCNRHVESVDKRHCSLQVVPEEIYRYSRSLEELLLDANQLRELPKPFFRLLNLRKLGLSDNEIQRLPPEVANFMQLVELDVSRNDIPEIPESIKFCKALEIADFSGNPLSRLPDGFTQLRSLAHLALNDVSLQALPGDVGNLANLVTLELRENLLKSLPASLSFLVKLEQLDLGGNDLEVLPDTLGALPNLRELWLDRNQLSALPPELGNLRRLVCLDVSENRLEELPVELGGLALLTDLLLSQNLLQRLPEGIGQLKQLSILKVDQNRLCEVTEAIGDCENLSELILTENLLTALPHSLGKLTKLTNLNVDRNHLEVLPPEIGGCVALSVLSLRDNRLAVLPPELAHTAELHVLDVAGNRLRSLPFALTHLNLKALWLAENQAQPMLRFQTEDDAQTGEKVLTCYLLPQQPLPSLEDAGQQSSPSESCSDAPLSRVSVIQFEDTLEGEEDAEEAAAEKRGLQRRATPHPSELKVMKRGIEERRNEAFVCKPDPSPPSPSEEEKRLSAESALSGGSVPSASTASEGEPEILPAEVQGLGQHEAMPAQEEYTEDDYNEPTVHFAEDTLIPREDGESEEGQPEAAWPLPSGRQRLIRKDTPHYKKHFKISKLPQPEAVVALLQGVQTDREGPTAGWHNGPHTPWAPRAHEEEEEEEEENRDEEEGEATTEEDDKEEAVASAPSVKGVSFDQANNLLIEPARIEEEELTLTIVRQTGGLGISIAGGKGSTPYKGDDEGIFISRVSEEGPAARAGVRVGDKLLEVNGVALQDAEHHEAVEALRGAGAAVQMRVWRERMVEPENAVTITPLRPEDDYSPREWRGGGLRLPLLQPETPVSLRQRHAACLVRSEKGLGFSIAGGKGSTPYRAGDGGIFISRIAEGGAAHRAGTLQVGDRVLSINGVDMTEARHDHAVSLLTAASPTISLLLERETGGTYPPSPPPHSSPTPAATVAATVSTAVPGEPLLPRLSPSLLATALEGPYPVEEICLPRAGGPLGLSIVGGSDHSSHPFGVQDPGVFISKVLPRGLAARCGLRVGDRILAVNGQDVREATHQEAVSALLRPCLELCLLVRRDPPPPGMRELCIQKAPGEKLGISIRGGAKGHAGNPCDPTDEGIFISKVSPTGAAGRDGRLRVGLRLLEVNQQSLLGLTHAEAVQLLRSVGDTLTVLVCDGFDTSTTTALEVSPGVIANPFAAGLGHRNSLESISSIDRELSPEGPGKEKELASQALPWESESAETTGRNLEPLKLDYRALAALPSAGSLQRGPSATTGGKTTEAPCSPGSQQTKPGVIQPLAQAWPRNSPAPRGRGGPCSPPSPDELPANVKQAYRAFAAVPTVHPPENSATQPPTPGPAASPEQLSFRERQKYFELEVRVPQAEGPPKRVSLVGADDLRKMQEEEARKLQQKRAQMLREEAVTSGPDMGLASDRESPDDQQEAEQPWAVPSHAGGSSPSSPPPLGGNAPVRTAKAERRHQERLRMQSPELPAPERALSPAERRALEAEKRALWRAARMKSLEQDALRAQMVLSKSQEGRGKRGPLERLAEAPSPAPTPSPTPLEDFGLQTSASPGRLPLSGKKFDYRAFAALPSSRPVYDIQSPDFVEELRTLEASPSPGSQEEDGEVALVLLGRPSPGAVGPEDMTLCSSRRSVRPGRRGLGPVPS.

The segment at 1–804 (MLKCIPLWRC…MRVWRERMVE (804 aa)) is sufficient for targeting to adherens junction and to inhibit cell proliferation. S37 is modified (phosphoserine). LRR repeat units follow at residues 37-58 (SLEELLLDANQLRELPKPFFRL), 60-81 (NLRKLGLSDNEIQRLPPEVANF), 83-104 (QLVELDVSRNDIPEIPESIKFC), 106-127 (ALEIADFSGNPLSRLPDGFTQL), 129-150 (SLAHLALNDVSLQALPGDVGNL), 152-174 (NLVTLELRENLLKSLPASLSFLV), 175-197 (KLEQLDLGGNDLEVLPDTLGALP), 198-219 (NLRELWLDRNQLSALPPELGNL), 221-243 (RLVCLDVSENRLEELPVELGGLA), 244-265 (LLTDLLLSQNLLQRLPEGIGQL), 267-288 (QLSILKVDQNRLCEVTEAIGDC), 290-312 (NLSELILTENLLTALPHSLGKLT), 313-334 (KLTNLNVDRNHLEVLPPEIGGC), 336-357 (ALSVLSLRDNRLAVLPPELAHT), 359-381 (ELHVLDVAGNRLRSLPFALTHLN), and 382-402 (LKALWLAENQAQPMLRFQTED). Residue T378 is modified to Phosphothreonine. 2 disordered regions span residues 422–615 (PSLE…HFKI) and 635–689 (REGP…SAPS). Residues 428–437 (GQQSSPSESC) show a composition bias toward polar residues. A compositionally biased stretch (acidic residues) spans 452–463 (DTLEGEEDAEEA). Residues 455–475 (EGEEDAEEAAAEKRGLQRRAT) are a coiled coil. Phosphothreonine is present on T475. Composition is skewed to basic and acidic residues over residues 479-494 (SELKVMKRGIEERRNE) and 570-580 (FAEDTLIPRED). S583 carries the post-translational modification Phosphoserine. Residues 653–687 (RAHEEEEEEEEENRDEEEGEATTEEDDKEEAVASA) adopt a coiled-coil conformation. Acidic residues predominate over residues 657 to 681 (EEEEEEEENRDEEEGEATTEEDDKE). Phosphothreonine occurs at positions 674 and 675. Phosphoserine is present on residues S694 and S750. An interaction with ARHGEF7 region spans residues 703–1215 (IEPARIEEEE…SLESISSIDR (513 aa)). The PDZ 1 domain maps to 714–801 (TLTIVRQTGG…AVQMRVWRER (88 aa)). Residues 714–1180 (TLTIVRQTGG…TVLVCDGFDT (467 aa)) form a required for interaction with VIM region. Position 812 is a phosphothreonine (T812). Phosphoserine is present on residues S821, S861, and S925. PDZ domains are found at residues 848–936 (AACL…ERET), 990–1079 (EICL…RRDP), and 1086–1180 (ELCI…GFDT). Phosphoserine is present on residues S1126, S1206, S1209, S1212, S1218, S1262, S1265, and S1284. Residues 1213-1228 (IDRELSPEGPGKEKEL) are compositionally biased toward basic and acidic residues. The interval 1213–1246 (IDRELSPEGPGKEKELASQALPWESESAETTGRN) is disordered. Disordered regions lie at residues 1263 to 1325 (AGSL…DELP) and 1341 to 1501 (VHPP…AERR). The segment covering 1264–1277 (GSLQRGPSATTGGK) has biased composition (polar residues). K1291 carries the omega-N-methylarginine modification. A1299 is subject to Phosphoserine. R1312 is subject to Omega-N-methylarginine. The residue at position 1320 (S1320) is a Phosphoserine. Residue T1353 is modified to Phosphothreonine. S1359 is subject to Phosphoserine. Residues 1364 to 1376 (SFRERQKYFELEV) show a composition bias toward basic and acidic residues. A Phosphoserine modification is found at S1389. Positions 1390–1421 (LVGADDLRKMQEEEARKLQQKRAQMLREEAVT) form a coiled coil. Over residues 1394–1406 (DDLRKMQEEEARK) the composition is skewed to basic and acidic residues. Residues S1455 and S1458 each carry the phosphoserine modification. Residues 1471–1482 (AKAERRHQERLR) are compositionally biased toward basic and acidic residues. Phosphoserine is present on residues S1485, S1496, and S1518. The segment at 1530 to 1577 (LSKSQEGRGKRGPLERLAEAPSPAPTPSPTPLEDFGLQTSASPGRLPL) is disordered. The segment covering 1534 to 1547 (QEGRGKRGPLERLA) has biased composition (basic and acidic residues). The residue at position 1551 (S1551) is a Phosphoserine. The residue at position 1555 (T1555) is a Phosphothreonine. A phosphoserine mark is found at S1557, S1571, and S1601. The segment at 1632 to 1665 (GRPSPGAVGPEDMTLCSSRRSVRPGRRGLGPVPS) is disordered.

This sequence belongs to the LAP (LRR and PDZ) protein family. As to quaternary structure, interacts with UBE3A. Interacts with PAK1 and PAK2. Interacts (via PDZ domains) with VANGL2. Interacts (via PDZ domains) with LPP and TRIP6; the interaction is direct. Interacts (via PDZ domains) with TJP2. Interacts (via PDZ domains) with APC; may mediate APC targeting to adherens junctions of epithelial cells. Interacts (via PDZ domains) with TSHR; regulates TSHR trafficking and function. Interacts with ARHGEF7 and GIT1; interacts directly with ARHGEF7. Interacts with CTNNB1. Interacts with MAPK12. Interacts (via PDZ domains 1 and 3) with MCC. Interacts with DLG5. Interacts with STK4/MST1 and LATS1 in the presence of DLG5. Interacts (via PDZ domain 3) with CRTAM (via PDZ-binding motif); the interaction promotes CRTAM and SCRIB polarization in a subset of CD4+ T-cells. Interacts with YES1, when YES1 is in a closed conformation; the interaction facilitates YES1 autophosphorylation. Interacts (via PDZ domains) with VIM; the interaction protects SCRIB from proteasomal degradation and facilitates SCRIB localization to intermediate filaments, the interaction is reduced by cell contact inhibition. Ubiquitinated; targeted for UBE3A-dependent multiubiquitination and degraded. Post-translationally, palmitoylated. Could be depalmitoylated by LYPLA1 and/or LYPLA2. Palmitoylation of SCRIB by ZDHHC7 is required for its localization to cell-cell junctions, function in the establishement of epithelial cell polarity and the regulation of downstream signaling pathways important for epithelial cell differentiation. As to expression, expressed in CD4+ T-cells (at protein level). Found in a wide range of tissues including liver, kidney and spleen. Also expressed in the brain (at protein level).

The protein resides in the cell membrane. It localises to the cell junction. It is found in the adherens junction. Its subcellular location is the cell projection. The protein localises to the lamellipodium. The protein resides in the cytoplasm. It localises to the postsynapse. It is found in the presynapse. Functionally, scaffold protein involved in different aspects of polarized cell differentiation regulating epithelial and neuronal morphogenesis and T-cell polarization. Via its interaction with CRTAM, required for the late phase polarization of a subset of CD4+ T-cells, which in turn regulates TCR-mediated proliferation and IFNG and IL22 production. Plays a role in cell directional movement, cell orientation, cell sheet organization and Golgi complex polarization at the cell migration front. Promotes epithelial cell layer barrier function via maintaining cell-cell adhesion. Most probably functions in the establishment of apico-basal cell polarity. May function in cell proliferation regulating progression from G1 to S phase and as a positive regulator of apoptosis for instance during acinar morphogenesis of the mammary epithelium. May regulate cell invasion via MAPK-mediated cell migration and adhesion. May play a role in exocytosis and in the targeting of synaptic vesicles to synapses. Functions as an activator of Rac GTPase activity. The polypeptide is Protein scribble homolog (Mus musculus (Mouse)).